The sequence spans 91 residues: Small ribosomal subunit protein uS19 (91 aa).

Belongs to the universal ribosomal protein uS19 family.

Protein S19 forms a complex with S13 that binds strongly to the 16S ribosomal RNA. The polypeptide is Small ribosomal subunit protein uS19 (Synechococcus sp. (strain CC9605)).